The chain runs to 118 residues: Melanoma antigen recognized by T-cells 1 (118 aa).

A helical transmembrane segment spans residues 27–47 (AAGIGILTVILGVLLLIGCWY). Residues 48–118 (CRRRNGYRAL…AEQSPPPYSP (71 aa)) lie on the Cytoplasmic side of the membrane. Residues 78–118 (GFDHRDSKVSLQEKNCEPVVPNAPPAYEKLSAEQSPPPYSP) form a disordered region. At S108 the chain carries Phosphoserine.

As to quaternary structure, interacts with PMEL. Interacts with GPR143. Post-translationally, acylated. As to expression, expression is restricted to melanoma and melanocyte cell lines and retina.

The protein resides in the endoplasmic reticulum membrane. The protein localises to the golgi apparatus. Its subcellular location is the trans-Golgi network membrane. It localises to the melanosome. In terms of biological role, involved in melanosome biogenesis by ensuring the stability of GPR143. Plays a vital role in the expression, stability, trafficking, and processing of melanocyte protein PMEL, which is critical to the formation of stage II melanosomes. This chain is Melanoma antigen recognized by T-cells 1 (MLANA), found in Homo sapiens (Human).